The sequence spans 373 residues: Alanine racemase (373 aa).

The active-site Proton acceptor; specific for D-alanine is the Lys35. Lys35 bears the N6-(pyridoxal phosphate)lysine mark. Arg130 contacts substrate. Tyr253 serves as the catalytic Proton acceptor; specific for L-alanine. Met305 lines the substrate pocket.

This sequence belongs to the alanine racemase family. The cofactor is pyridoxal 5'-phosphate.

It carries out the reaction L-alanine = D-alanine. The protein operates within amino-acid biosynthesis; D-alanine biosynthesis; D-alanine from L-alanine: step 1/1. Functionally, catalyzes the interconversion of L-alanine and D-alanine. May also act on other amino acids. The polypeptide is Alanine racemase (alr) (Cupriavidus necator (strain ATCC 17699 / DSM 428 / KCTC 22496 / NCIMB 10442 / H16 / Stanier 337) (Ralstonia eutropha)).